Consider the following 387-residue polypeptide: Large ribosomal subunit protein uL3 (387 aa).

Belongs to the universal ribosomal protein uL3 family.

It localises to the cytoplasm. In Kluyveromyces lactis (strain ATCC 8585 / CBS 2359 / DSM 70799 / NBRC 1267 / NRRL Y-1140 / WM37) (Yeast), this protein is Large ribosomal subunit protein uL3 (RPL3).